We begin with the raw amino-acid sequence, 347 residues long: NADH-ubiquinone oxidoreductase chain 2 (347 aa).

The next 10 membrane-spanning stretches (helical) occupy residues 3–23, 25–45, 66–86, 111–131, 149–169, 178–198, 201–221, 237–257, 274–294, and 325–345; these read PPIL…VMLS, HWLL…PILM, ASML…QWVI, FHFW…MILL, INTN…GWGG, IMAY…TYNP, MVLN…LFML, FPLI…LPPL, NMII…YFYL, and LLPP…MLSV.

It belongs to the complex I subunit 2 family. In terms of assembly, core subunit of respiratory chain NADH dehydrogenase (Complex I) which is composed of 45 different subunits. Interacts with TMEM242.

The protein localises to the mitochondrion inner membrane. It catalyses the reaction a ubiquinone + NADH + 5 H(+)(in) = a ubiquinol + NAD(+) + 4 H(+)(out). Functionally, core subunit of the mitochondrial membrane respiratory chain NADH dehydrogenase (Complex I) which catalyzes electron transfer from NADH through the respiratory chain, using ubiquinone as an electron acceptor. Essential for the catalytic activity and assembly of complex I. This is NADH-ubiquinone oxidoreductase chain 2 from Canis lupus familiaris (Dog).